The chain runs to 528 residues: Adhesion G-protein coupled receptor G5 (528 aa).

Residues 1-21 form the signal peptide; the sequence is MDHCGALFLCLCLLTLQNATT. Residues 22–245 are Extracellular-facing; the sequence is ETWEELLSYM…SPALVPAELL (224 aa). 6 N-linked (GlcNAc...) asparagine glycosylation sites follow: Asn58, Asn65, Asn146, Asn147, Asn173, and Asn179. In terms of domain architecture, GAIN-B spans 78–239; the sequence is FKLSCDFSGL…AVLMQLSPAL (162 aa). Disulfide bonds link Cys189-Cys221 and Cys209-Cys223. Residues 189-239 form a GPS region; it reads CVFWKEGARKQPWGGWSPEGCRTEQPSHSQVLCRCNHLTYFAVLMQLSPAL. The interval 228-236 is stachel; the sequence is YFAVLMQLS. The chain crosses the membrane as a helical span at residues 246–271; sequence APLTYISLVGCSISIVASLITVLLHF. At 272-280 the chain is on the cytoplasmic side; the sequence is HFRKQSDSL. Residues 281 to 304 traverse the membrane as a helical segment; sequence TRIHMNLHASVLLLNIAFLLSPAF. Residues 305-314 lie on the Extracellular side of the membrane; the sequence is AMSPVPGSAC. An intrachain disulfide couples Cys314 to Cys404. The chain crosses the membrane as a helical span at residues 315–340; it reads TALAAALHYALLSCLTWMAIEGFNLY. Topologically, residues 341-353 are cytoplasmic; that stretch reads LLLGRVYNIYIRR. A helical membrane pass occupies residues 354–377; the sequence is YVFKLGVLGWGAPALLVLLSLSVK. Residues 378–410 lie on the Extracellular side of the membrane; sequence SSVYGPCTIPVFDSWENGTGFQNMSICWVRSPV. Asn394 and Asn400 each carry an N-linked (GlcNAc...) asparagine glycan. The helical transmembrane segment at 411–435 threads the bilayer; that stretch reads VHSVLVMGYGGLTSLFNLVVLAWAL. The Cytoplasmic segment spans residues 436–455; sequence WTLRRLRERADAPSVRACHD. A helical transmembrane segment spans residues 456-477; that stretch reads TVTVLGLTVLLGTTWALAFFSF. Over 478 to 481 the chain is Extracellular; the sequence is GVFL. The chain crosses the membrane as a helical span at residues 482–505; the sequence is LPQLFLFTILNSLYGFFLFLWFCS. The Cytoplasmic segment spans residues 506-528; that stretch reads QRCRSEAEAKAQIEAFSSSQTTQ.

This sequence belongs to the G-protein coupled receptor 2 family. Adhesion G-protein coupled receptor (ADGR) subfamily. Heterodimer of 2 chains generated by proteolytic processing; the large extracellular N-terminal fragment and the membrane-bound C-terminal fragment predominantly remain associated and non-covalently linked. Post-translationally, autoproteolytically processed at the GPS region of the GAIN-B domain; this cleavage modulates receptor activity. In terms of processing, N-glycsylated. Expressed in immune cells. Primarily found in granulocytes. Found in eosinophils.

The protein localises to the cell membrane. With respect to regulation, forms a heterodimer of 2 chains generated by proteolytic processing that remain associated through non-covalent interactions mediated by the GAIN-B domain. In the inactivated receptor, the Stachel sequence (also named stalk) is embedded in the GAIN-B domain, where it adopts a beta-strand conformation. On activation, the Stachel moves into the 7 transmembrane region and adopts a twisted hook-shaped configuration that forms contacts within the receptor, leading to coupling of a G-alpha protein, which activates signaling. The cleaved GAIN-B and N-terminal domains can then dissociate from the rest of the receptor. Orphan adhesion G-protein coupled receptor (aGPCR). Ligand binding causes a conformation change that triggers signaling via guanine nucleotide-binding proteins (G proteins) and modulates the activity of downstream effectors, such as adenylate cyclase. ADGRG5 is specifically coupled to G(s) G proteins and mediates activation of adenylate cyclase activity. The chain is Adhesion G-protein coupled receptor G5 from Homo sapiens (Human).